Here is a 420-residue protein sequence, read N- to C-terminus: Torsin-4A (420 aa).

A helical transmembrane segment spans residues 130–150 (CLLLFIAIVCFQIFNAIENLD). 202 to 209 (GPSGVGKS) is an ATP binding site.

Belongs to the ClpA/ClpB family. Torsin subfamily.

The protein resides in the membrane. The chain is Torsin-4A (tor4a) from Xenopus tropicalis (Western clawed frog).